The sequence spans 577 residues: Arginine--tRNA ligase (577 aa).

Residues 122–132 carry the 'HIGH' region motif; the sequence is PNVAKEMHVGH.

Belongs to the class-I aminoacyl-tRNA synthetase family. In terms of assembly, monomer.

Its subcellular location is the cytoplasm. It carries out the reaction tRNA(Arg) + L-arginine + ATP = L-arginyl-tRNA(Arg) + AMP + diphosphate. This is Arginine--tRNA ligase from Aliivibrio salmonicida (strain LFI1238) (Vibrio salmonicida (strain LFI1238)).